A 151-amino-acid chain; its full sequence is Cathelicidin-3 (151 aa).

Residues 1 to 17 (MLSCWVLLLALLGGACA) form the signal peptide. The propeptide occupies 18–122 (LPAPLGYSQA…TCVDSMADPV (105 aa)). 2 cysteine pairs are disulfide-bonded: Cys-75-Cys-86 and Cys-97-Cys-114. A helical membrane pass occupies residues 128-148 (WPLVPVAINTVAAGINLYKAI).

It belongs to the cathelicidin family. In terms of tissue distribution, detected in bone marrow, liver and lung.

Its subcellular location is the secreted. The protein localises to the membrane. Functionally, may bind bacterial lipopolysaccharide (LPS). May have antimicrobial activity and play a role in the innate immune response. The polypeptide is Cathelicidin-3 (CATHL3) (Gallus gallus (Chicken)).